Consider the following 250-residue polypeptide: Small ribosomal subunit protein uS2 (250 aa).

The protein belongs to the universal ribosomal protein uS2 family.

This Polaromonas sp. (strain JS666 / ATCC BAA-500) protein is Small ribosomal subunit protein uS2.